We begin with the raw amino-acid sequence, 352 residues long: Nicotinate-nucleotide--dimethylbenzimidazole phosphoribosyltransferase (352 aa).

Glutamate 318 acts as the Proton acceptor in catalysis.

Belongs to the CobT family.

The enzyme catalyses 5,6-dimethylbenzimidazole + nicotinate beta-D-ribonucleotide = alpha-ribazole 5'-phosphate + nicotinate + H(+). The protein operates within nucleoside biosynthesis; alpha-ribazole biosynthesis; alpha-ribazole from 5,6-dimethylbenzimidazole: step 1/2. Functionally, catalyzes the synthesis of alpha-ribazole-5'-phosphate from nicotinate mononucleotide (NAMN) and 5,6-dimethylbenzimidazole (DMB). This Dehalococcoides mccartyi (strain CBDB1) protein is Nicotinate-nucleotide--dimethylbenzimidazole phosphoribosyltransferase.